We begin with the raw amino-acid sequence, 266 residues long: 4-hydroxy-tetrahydrodipicolinate reductase (266 aa).

10–15 (GPRGRM) contributes to the NAD(+) binding site. Residue Lys38 participates in NADP(+) binding. NAD(+)-binding positions include 99–101 (GTT) and 125–128 (APNF). Catalysis depends on His155, which acts as the Proton donor/acceptor. His156 serves as a coordination point for (S)-2,3,4,5-tetrahydrodipicolinate. Lys159 serves as the catalytic Proton donor. Position 165–166 (165–166 (GT)) interacts with (S)-2,3,4,5-tetrahydrodipicolinate.

It belongs to the DapB family.

The protein localises to the cytoplasm. The enzyme catalyses (S)-2,3,4,5-tetrahydrodipicolinate + NAD(+) + H2O = (2S,4S)-4-hydroxy-2,3,4,5-tetrahydrodipicolinate + NADH + H(+). The catalysed reaction is (S)-2,3,4,5-tetrahydrodipicolinate + NADP(+) + H2O = (2S,4S)-4-hydroxy-2,3,4,5-tetrahydrodipicolinate + NADPH + H(+). It functions in the pathway amino-acid biosynthesis; L-lysine biosynthesis via DAP pathway; (S)-tetrahydrodipicolinate from L-aspartate: step 4/4. In terms of biological role, catalyzes the conversion of 4-hydroxy-tetrahydrodipicolinate (HTPA) to tetrahydrodipicolinate. The sequence is that of 4-hydroxy-tetrahydrodipicolinate reductase from Bacillus mycoides (strain KBAB4) (Bacillus weihenstephanensis).